A 416-amino-acid polypeptide reads, in one-letter code: Enterobactin exporter EntS (416 aa).

At 1–21 (MNKQSWLLNLSLLKTHPAFRA) the chain is on the cytoplasmic side. A helical membrane pass occupies residues 22–42 (VFLARFISIVSLGLLGVAVPV). Topologically, residues 43-55 (QIQMMTHSTWQVG) are periplasmic. Residues 56 to 76 (LSVTLTGGAMFVGLMVGGVLA) traverse the membrane as a helical segment. Residues 77-83 (DRYERKK) are Cytoplasmic-facing. The helical transmembrane segment at 84–104 (VILLARGTCGIGFIGLCLNAL) threads the bilayer. The Periplasmic segment spans residues 105 to 109 (LPEPS). Residues 110–130 (LLAIYLLGLWDGFFASLGVTA) traverse the membrane as a helical segment. Topologically, residues 131–156 (LLAATPALVGRENLMQAGAITMLTVR) are cytoplasmic. Residues 157–177 (LGSVISPMIGGLLLATGGVAW) form a helical membrane-spanning segment. A topological domain (periplasmic) is located at residue N178. A helical membrane pass occupies residues 179-199 (YGLAAAGTFITLLPLLSLPAL). The Cytoplasmic portion of the chain corresponds to 200 to 218 (PPPPQPREHPLKSLLAGFR). A helical membrane pass occupies residues 219–239 (FLLASPLVGGIALLGGLLTMA). The Periplasmic segment spans residues 240–256 (SAVRVLYPALADNWQMS). A helical transmembrane segment spans residues 257–277 (AAQIGFLYAAIPLGAAIGALT). Topologically, residues 278-287 (SGKLAHSARP) are cytoplasmic. A helical transmembrane segment spans residues 288–307 (GLLMLLSTLGSFLAIGLFGL). Residues 308-313 (MPMWIL) are Periplasmic-facing. A helical membrane pass occupies residues 314 to 336 (GVVCLALFGWLSAVSSLLQYTML). Over 337 to 356 (QTQTPEAMLGRINGLWTAQN) the chain is Cytoplasmic. Residues 357 to 377 (VTGDAIGAALLGGLGAMMTPV) traverse the membrane as a helical segment. Position 378 (A378) is a topological domain, periplasmic. The helical transmembrane segment at 379–399 (SASASGFGLLIIGVLLLLVLV) threads the bilayer. Residues 400–416 (ELRRFRQTPPQMTASDS) lie on the Cytoplasmic side of the membrane.

It belongs to the major facilitator superfamily. EntS (TC 2.A.1.38) family.

The protein localises to the cell inner membrane. Functionally, component of an export pathway for enterobactin. This Escherichia coli O7:K1 (strain IAI39 / ExPEC) protein is Enterobactin exporter EntS.